We begin with the raw amino-acid sequence, 695 residues long: Elongation factor G 1 (695 aa).

A tr-type G domain is found at 5–280; that stretch reads ARYRNIGIFA…AVVDYLPSPT (276 aa). GTP-binding positions include 14-21, 78-82, and 132-135; these read AHVDAGKT, DTPGH, and NKLD.

This sequence belongs to the TRAFAC class translation factor GTPase superfamily. Classic translation factor GTPase family. EF-G/EF-2 subfamily.

Its subcellular location is the cytoplasm. In terms of biological role, catalyzes the GTP-dependent ribosomal translocation step during translation elongation. During this step, the ribosome changes from the pre-translocational (PRE) to the post-translocational (POST) state as the newly formed A-site-bound peptidyl-tRNA and P-site-bound deacylated tRNA move to the P and E sites, respectively. Catalyzes the coordinated movement of the two tRNA molecules, the mRNA and conformational changes in the ribosome. In Pseudoalteromonas atlantica (strain T6c / ATCC BAA-1087), this protein is Elongation factor G 1.